A 105-amino-acid chain; its full sequence is Large ribosomal subunit protein uL24 (105 aa).

Belongs to the universal ribosomal protein uL24 family. Part of the 50S ribosomal subunit.

In terms of biological role, one of two assembly initiator proteins, it binds directly to the 5'-end of the 23S rRNA, where it nucleates assembly of the 50S subunit. Its function is as follows. One of the proteins that surrounds the polypeptide exit tunnel on the outside of the subunit. The chain is Large ribosomal subunit protein uL24 from Francisella tularensis subsp. novicida (strain U112).